We begin with the raw amino-acid sequence, 239 residues long: Peptidase E (239 aa).

Residues Ser122, Asp137, and His159 each act as charge relay system in the active site.

The protein belongs to the peptidase S51 family.

The protein resides in the cytoplasm. The enzyme catalyses Dipeptidase E catalyzes the hydrolysis of dipeptides Asp-|-Xaa. It does not act on peptides with N-terminal Glu, Asn or Gln, nor does it cleave isoaspartyl peptides.. Functionally, hydrolyzes dipeptides containing N-terminal aspartate residues. May play a role in allowing the cell to use peptide aspartate to spare carbon otherwise required for the synthesis of the aspartate family of amino acids. The chain is Peptidase E from Shewanella baltica (strain OS195).